Reading from the N-terminus, the 500-residue chain is Cytochrome P450 81F1 (500 aa).

Residues 1–21 form a helical membrane-spanning segment; that stretch reads MLYFILLPLLFLVISYKFLYS. Residue Lys248 forms a Glycyl lysine isopeptide (Lys-Gly) (interchain with G-Cter in ubiquitin) linkage. Cys438 provides a ligand contact to heme.

This sequence belongs to the cytochrome P450 family. The cofactor is heme.

The protein localises to the membrane. It participates in secondary metabolite biosynthesis. Functionally, involved in indole glucosinolate biosynthesis. Catalyzes hydroxylation reactions of the glucosinolate indole ring. Converts indol-3-yl-methylglucosinolate (I3M) to 4-hydroxy-indol-3-yl-methylglucosinolate (4OH-I3M) and/or 1-hydroxy-indol-3-yl-methylglucosinolate (1OH-I3M) intermediates. These hydroxy intermediates are converted to 4-methoxy-indol-3-yl-methylglucosinolate (4MO-I3M) and 1-methoxy-indol-3-yl-methylglucosinolate (1MO-I3M) by indole glucosinolate methyltransferase 1 and 2 (IGMT1 and IGMT2). The sequence is that of Cytochrome P450 81F1 from Arabidopsis thaliana (Mouse-ear cress).